The following is a 469-amino-acid chain: RuvB-like helicase 2 (469 aa).

Residue 73 to 80 (GEPGTGKT) participates in ATP binding.

Belongs to the RuvB family. Forms homohexameric rings. May form a dodecamer with rvb1 made of two stacked hexameric rings. Component of the chromatin remodeling Ino80 complex. Component of the RNA polymerase II holoenzyme complex.

The protein resides in the nucleus. The catalysed reaction is ATP + H2O = ADP + phosphate + H(+). In terms of biological role, has double-stranded DNA-stimulated ATPase and ATP-dependent DNA helicase (5' to 3') activity suggesting a role in nuclear processes such as recombination and transcription. Functionally, proposed core component of the chromatin remodeling Ino80 complex which is involved in transcriptional regulation, DNA replication and probably DNA repair. This Dictyostelium discoideum (Social amoeba) protein is RuvB-like helicase 2 (rvb2).